Here is a 401-residue protein sequence, read N- to C-terminus: Chalcone synthase 6 (401 aa).

Cysteine 168 is an active-site residue.

Belongs to the thiolase-like superfamily. Chalcone/stilbene synthases family.

The catalysed reaction is (E)-4-coumaroyl-CoA + 3 malonyl-CoA + 3 H(+) = 2',4,4',6'-tetrahydroxychalcone + 3 CO2 + 4 CoA. It functions in the pathway secondary metabolite biosynthesis; flavonoid biosynthesis. Its function is as follows. The primary product of this enzyme is 4,2',4',6'-tetrahydroxychalcone (also termed naringenin-chalcone or chalcone) which can under specific conditions spontaneously isomerize into naringenin. The chain is Chalcone synthase 6 (CHS6) from Sorghum bicolor (Sorghum).